The following is a 73-amino-acid chain: RNA-binding protein Hfq (73 aa).

Positions 8–68 constitute a Sm domain; it reads DQFLNQIRKD…ISTFAPQKNV (61 aa).

Belongs to the Hfq family. In terms of assembly, homohexamer.

Its function is as follows. RNA chaperone that binds small regulatory RNA (sRNAs) and mRNAs to facilitate mRNA translational regulation in response to envelope stress, environmental stress and changes in metabolite concentrations. Also binds with high specificity to tRNAs. The polypeptide is RNA-binding protein Hfq (Bacillus velezensis (strain DSM 23117 / BGSC 10A6 / LMG 26770 / FZB42) (Bacillus amyloliquefaciens subsp. plantarum)).